Reading from the N-terminus, the 153-residue chain is UPF0260 protein YcgN (153 aa).

It belongs to the UPF0260 family.

This Shigella flexneri serotype 5b (strain 8401) protein is UPF0260 protein YcgN.